Reading from the N-terminus, the 659-residue chain is MAEKIRITLIDNSEREVLQGTTTTQIAASISTSLAKKALAARFNGQMIDLSQPLLEDGRLEIITAENEAEALELVRHDYAHILAEAVQKLFPGTQITFGPVTDDGFYYDFAPKDRPFTEEDLPLIEAEMRKIIAQNNALVREVWERDKLISLWESQGEKFKAEWAKELPEGQELTIYRAGEWFDMCRGPHLPSTGKLDPKAFKLTRVSGAYWRGDQNNAMLSRIYGTGWLNAKQLKAHLERLEEAQKRDHRRLGQEMDLFHLQQEAQGSVFWHPNGYTIWLQLEAYLRRRMKNANYKEVKTPQLMDAALWEASGHWGKFRENMFVVPDEIPSTDPDKPVLSGKGNLMALKPMNCPAHIQIFKQGIRSYRELPLRMLEFGCCHRNEAHGALHGLMRVRQLTQDDAHIFCTAEQIVTETKDFVNLLDSIYRDLGFTSYAVKLSLRPELRAGDDELWDNAENGLRSALEQVGITDYEELPGEGAFYGPKLEFHLTDAIGRTWQCGTLQLDYVLPERLDASYVAEDGSRKRPVMLHRAIIGTFERFIGILIEHHAGRFPLWMAPVQAVVATIVSEADSFAESVVEKMKAAGLRVVSDIRNEKINYKIREHSLTKVPNILVVGKREAEEGKVAIRKLGSRDQIILSVDEAIALLLEEATPPDLK.

In terms of domain architecture, TGS spans glutamate 3–threonine 64. Residues aspartate 249–proline 555 are catalytic. The Zn(2+) site is built by cysteine 354, histidine 405, and histidine 532.

This sequence belongs to the class-II aminoacyl-tRNA synthetase family. As to quaternary structure, homodimer. The cofactor is Zn(2+).

It is found in the cytoplasm. The enzyme catalyses tRNA(Thr) + L-threonine + ATP = L-threonyl-tRNA(Thr) + AMP + diphosphate + H(+). Functionally, catalyzes the attachment of threonine to tRNA(Thr) in a two-step reaction: L-threonine is first activated by ATP to form Thr-AMP and then transferred to the acceptor end of tRNA(Thr). Also edits incorrectly charged L-seryl-tRNA(Thr). The protein is Threonine--tRNA ligase of Zymomonas mobilis subsp. mobilis (strain ATCC 31821 / ZM4 / CP4).